Here is a 595-residue protein sequence, read N- to C-terminus: Inactive serine/threonine-protein kinase PLK5 (595 aa).

The region spanning 27-279 (YRRGKLIGKG…LDHLLQDDFF (253 aa)) is the Protein kinase domain. ATP contacts are provided by residues 33-41 (IGKGAFSRC) and K56. D150 serves as the catalytic Proton acceptor. The tract at residues 326–350 (FTSKEASGPGEEGTEPDHMEAGNEE) is disordered. Residues 340–350 (EPDHMEAGNEE) show a composition bias toward basic and acidic residues. POLO box domains are found at residues 413 to 491 (WAPK…YMQR) and 509 to 595 (DISL…LQSV).

This sequence belongs to the protein kinase superfamily. Ser/Thr protein kinase family. CDC5/Polo subfamily. As to expression, expressed in the cerebellum, eye and brain cortex (at protein level). Expressed in highly differentiated tissues, such as brain, eyes and ovary. Not detectable in proliferating tissues, such as the colon, spleen and placenta.

It localises to the nucleus. It is found in the nucleolus. The protein resides in the cytoplasm. Its function is as follows. Inactive serine/threonine-protein kinase that plays a role in cell cycle progression and neuronal differentiation. This is Inactive serine/threonine-protein kinase PLK5 from Mus musculus (Mouse).